The following is a 92-amino-acid chain: UPF0728 protein (92 aa).

It belongs to the UPF0728 family.

The polypeptide is UPF0728 protein (Branchiostoma floridae (Florida lancelet)).